The primary structure comprises 510 residues: Protein disulfide-isomerase (510 aa).

Residues 1 to 20 (MLRRALLCLALTALFRAGAG) form the signal peptide. Positions 27-136 (HVLVLHKGNF…IVNWLKKRTG (110 aa)) constitute a Thioredoxin 1 domain. Catalysis depends on nucleophile residues Cys55 and Cys58. The cysteines at positions 55 and 58 are disulfide-linked. The residue at position 202 (Lys202) is an N6-acetyllysine. 2 positions are modified to N6-succinyllysine: Lys224 and Lys273. A phosphoserine mark is found at Ser333 and Ser359. Residues 351–477 (GKIKPHLMSQ…FKKFLESGGQ (127 aa)) form the Thioredoxin 2 domain. Active-site nucleophile residues include Cys399 and Cys402. Residues Cys399 and Cys402 are joined by a disulfide bond. Ser429 is modified (phosphoserine). The segment at 473-510 (ESGGQDGAGDDDDLEDLEEAEEPDLEEDDDQKAVKDEL) is disordered. Residues 480-502 (AGDDDDLEDLEEAEEPDLEEDDD) show a composition bias toward acidic residues. Residues 507-510 (KDEL) carry the Prevents secretion from ER motif.

Belongs to the protein disulfide isomerase family. As to quaternary structure, heterodimer; heterodimerizes with the protein microsomal triglyceride transfer MTTP. Homodimer. Monomers and homotetramers may also occur. Interacts with P4HA2, forming a heterotetramer consisting of 2 alpha subunits (P4HA2) and 2 beta (P4HB), where P4HB plays the role of a structural subunit; this tetramer catalyzes the formation of 4-hydroxyproline in collagen. Also constitutes the structural subunit of the microsomal triacylglycerol transfer protein MTTP in mammalian cells. Stabilizes both enzymes and retain them in the ER without contributing to the catalytic activity. Binds UBQLN1. Interacts with ERO1B. Interacts with ILDR2. Interacts with ERN1/IRE1A (via N-terminus); the interaction is enhanced by phosphorylation of P4HB by FAM20C in response to endoplasmic reticulum stress and results in attenuation of ERN1 activity. In terms of processing, phosphorylation of Ser-359 by FAM20C is induced by endoplasmic reticulum stress and results in a functional switch from oxidoreductase to molecular chaperone. It also promotes interaction with ERN1.

The protein resides in the endoplasmic reticulum. It is found in the endoplasmic reticulum lumen. Its subcellular location is the melanosome. It localises to the cell membrane. The catalysed reaction is Catalyzes the rearrangement of -S-S- bonds in proteins.. This multifunctional protein catalyzes the formation, breakage and rearrangement of disulfide bonds. At the cell surface, seems to act as a reductase that cleaves disulfide bonds of proteins attached to the cell. May therefore cause structural modifications of exofacial proteins. Inside the cell, seems to form/rearrange disulfide bonds of nascent proteins. At high concentrations and following phosphorylation by FAM20C, functions as a chaperone that inhibits aggregation of misfolded proteins. At low concentrations, facilitates aggregation (anti-chaperone activity). May be involved with other chaperones in the structural modification of the TG precursor in hormone biogenesis. Also acts as a structural subunit of various enzymes such as prolyl 4-hydroxylase and microsomal triacylglycerol transfer protein MTTP. Receptor for LGALS9; the interaction retains P4HB at the cell surface of Th2 T helper cells, increasing disulfide reductase activity at the plasma membrane, altering the plasma membrane redox state and enhancing cell migration. This is Protein disulfide-isomerase (P4HB) from Bos taurus (Bovine).